We begin with the raw amino-acid sequence, 204 residues long: Twist-related protein 1 (204 aa).

Residues 1-18 show a composition bias toward low complexity; the sequence is MMQDVSSSPVSPADDSLS. A disordered region spans residues 1-107; it reads MMQDVSSSPV…GGGSPQSYEE (107 aa). The segment covering 34-43 has biased composition (basic residues); that stretch reads RGGRKRRSSR. 2 stretches are compositionally biased toward gly residues: residues 46 to 65 and 80 to 101; these read AGGG…GGDE and GCGG…GGGS. Residues 110-161 enclose the bHLH domain; it reads TQRVMANVRERQRTQSLNEAFAALRKIIPTLPSDKLSKIQTLKLAARYIDFL. Residues 163–193 are sufficient for transactivation activity; that stretch reads QVLQSDELDSKMASCSYVAHERFSYAFSVWR.

As to quaternary structure, efficient DNA binding requires dimerization with another bHLH protein. Homodimer or heterodimer with E proteins such as TCF3. ID1 binds preferentially to TCF3 but does not interact efficiently with TWIST1 so ID1 levels control the amount of TCF3 available to dimerize with TWIST and thus determine the type of dimer formed.

The protein localises to the nucleus. Functionally, acts as a transcriptional regulator. Inhibits myogenesis by sequestrating E proteins, inhibiting trans-activation by MEF2, and inhibiting DNA-binding by MYOD1 through physical interaction. This interaction probably involves the basic domains of both proteins. Also represses expression of pro-inflammatory cytokines such as TNFA and IL1B. Regulates cranial suture patterning and fusion. Activates transcription as a heterodimer with E proteins. Regulates gene expression differentially, depending on dimer composition. Homodimers induce expression of FGFR2 and POSTN while heterodimers repress FGFR2 and POSTN expression and induce THBS1 expression. Heterodimerization is also required for osteoblast differentiation. Represses the activity of the circadian transcriptional activator: NPAS2-BMAL1 heterodimer. The sequence is that of Twist-related protein 1 (TWIST1) from Nomascus concolor (Black crested gibbon).